Consider the following 77-residue polypeptide: Conotoxin ArMKLT2-022 (77 aa).

The signal sequence occupies residues methionine 1–alanine 22. Positions aspartate 23–threonine 46 are excised as a propeptide. At glutamine 49 the chain carries Pyrrolidone carboxylic acid. Intrachain disulfides connect cysteine 50-cysteine 65, cysteine 57-cysteine 68, and cysteine 64-cysteine 73.

Belongs to the conotoxin O1 superfamily. In terms of tissue distribution, expressed by the venom duct.

Its subcellular location is the secreted. This chain is Conotoxin ArMKLT2-022, found in Conus arenatus (Sand-dusted cone).